We begin with the raw amino-acid sequence, 135 residues long: MVLEILARVIKVQLPAYLKRLPVPDSIAGFIRLTVSEWLRLLPFLGVLALLGYLAIRPFLPKKKQQKDSLINLKIQKENPKVVNEIDIEDLRIAKVAYCRCWRSKTFPVCDGSHNKHNELTGDNVGPLILKKKEV.

The Lumenal portion of the chain corresponds to 1–37 (MVLEILARVIKVQLPAYLKRLPVPDSIAGFIRLTVSE). Residues 38–60 (WLRLLPFLGVLALLGYLAIRPFL) traverse the membrane as a helical segment. The Cytoplasmic portion of the chain corresponds to 61 to 135 (PKKKQQKDSL…GPLILKKKEV (75 aa)). [2Fe-2S] cluster contacts are provided by Cys-99, Cys-101, Cys-110, and His-114.

This sequence belongs to the CISD protein family. CISD2 subfamily. Homodimer. It depends on [2Fe-2S] cluster as a cofactor.

It localises to the endoplasmic reticulum membrane. It is found in the mitochondrion outer membrane. Regulator of autophagy that contributes to antagonize becn1-mediated cellular autophagy at the endoplasmic reticulum. Participates in the interaction of bcl2 with becn1 and is required for bcl2-mediated depression of endoplasmic reticulum Ca(2+) stores during autophagy. This chain is CDGSH iron-sulfur domain-containing protein 2 (cisd2), found in Aquarana catesbeiana (American bullfrog).